A 215-amino-acid polypeptide reads, in one-letter code: Small ribosomal subunit protein uS3 (215 aa).

The region spanning 38–107 is the KH type-2 domain; that stretch reads IRDYIKKTYH…KFQLNIEEVK (70 aa).

This sequence belongs to the universal ribosomal protein uS3 family. In terms of assembly, part of the 30S ribosomal subunit. Forms a tight complex with proteins S10 and S14.

Binds the lower part of the 30S subunit head. Binds mRNA in the 70S ribosome, positioning it for translation. The protein is Small ribosomal subunit protein uS3 of Kosmotoga olearia (strain ATCC BAA-1733 / DSM 21960 / TBF 19.5.1).